We begin with the raw amino-acid sequence, 491 residues long: tRNA-2-methylthio-N(6)-dimethylallyladenosine synthase (491 aa).

In terms of domain architecture, MTTase N-terminal spans arginine 3–histidine 119. The [4Fe-4S] cluster site is built by cysteine 12, cysteine 48, cysteine 82, cysteine 156, cysteine 160, and cysteine 163. The Radical SAM core domain maps to arginine 142 to aspartate 372. The TRAM domain maps to lysine 375–isoleucine 446.

This sequence belongs to the methylthiotransferase family. MiaB subfamily. Monomer. The cofactor is [4Fe-4S] cluster.

The protein resides in the cytoplasm. The catalysed reaction is N(6)-dimethylallyladenosine(37) in tRNA + (sulfur carrier)-SH + AH2 + 2 S-adenosyl-L-methionine = 2-methylsulfanyl-N(6)-dimethylallyladenosine(37) in tRNA + (sulfur carrier)-H + 5'-deoxyadenosine + L-methionine + A + S-adenosyl-L-homocysteine + 2 H(+). Catalyzes the methylthiolation of N6-(dimethylallyl)adenosine (i(6)A), leading to the formation of 2-methylthio-N6-(dimethylallyl)adenosine (ms(2)i(6)A) at position 37 in tRNAs that read codons beginning with uridine. The protein is tRNA-2-methylthio-N(6)-dimethylallyladenosine synthase of Saccharopolyspora erythraea (strain ATCC 11635 / DSM 40517 / JCM 4748 / NBRC 13426 / NCIMB 8594 / NRRL 2338).